We begin with the raw amino-acid sequence, 380 residues long: 3-dehydroquinate synthase (380 aa).

Residues 68 to 73 (PGEPNK), 102 to 106 (GTVLD), 126 to 127 (TT), lysine 139, and lysine 148 contribute to the NAD(+) site. The Zn(2+) site is built by glutamate 181, histidine 243, and histidine 259.

It belongs to the sugar phosphate cyclases superfamily. Dehydroquinate synthase family. NAD(+) serves as cofactor. Co(2+) is required as a cofactor. Requires Zn(2+) as cofactor.

Its subcellular location is the cytoplasm. It carries out the reaction 7-phospho-2-dehydro-3-deoxy-D-arabino-heptonate = 3-dehydroquinate + phosphate. It participates in metabolic intermediate biosynthesis; chorismate biosynthesis; chorismate from D-erythrose 4-phosphate and phosphoenolpyruvate: step 2/7. In terms of biological role, catalyzes the conversion of 3-deoxy-D-arabino-heptulosonate 7-phosphate (DAHP) to dehydroquinate (DHQ). In Chlamydia pneumoniae (Chlamydophila pneumoniae), this protein is 3-dehydroquinate synthase (aroB).